Reading from the N-terminus, the 478-residue chain is MYPTLNLAVCLKSSHLISSHRFCLKNSQSTEKHQKEINISVKERYTCNPSHRQKKNGWVREKNALREPLTASLKFTIHLNSIVFRYIPLYAIIMVGNPVLRPVDMKMQPAPYQDRVRVVQKIYTQLKRFQSSSPHIIKASTIWEHEVAKIAKTRQSYAFNASILLRDIVKYKGNLDKTGKPKNNSSSLIQRSHVLQKLRSLLLDEETLSRNGFFVKMYDTDPINESESDYVECYRCETKFDVTKIMEPTVCRYHLQRKVYNRETKKREFPCCGASLESYSDISAGCMKAKNHVYKWENFTKLSSVVPFKSLVDIKGEENVLALDCEMAFTSKGYEMIRITIVDFWSSEVVYDKVIKPLGEIIDLNSKFSGIHHIDDTAPTIHEAEKCYICPSMINQNSILIGHGLDNDLRVMRIVHDKVIDTAVLYPAGKYKSSLKNLSFEILSRRIQGGEHDSSEDAIAAMDVIKKKLSIPLDKKSW.

An Exonuclease domain is found at 320 to 465 (VLALDCEMAF…EDAIAAMDVI (146 aa)).

This sequence belongs to the REXO1/REXO3 family.

The protein resides in the cytoplasm. Its subcellular location is the nucleus. Its function is as follows. 3' to 5' exoribonuclease required for proper 3' end maturation of MRP RNA and of the U5L snRNA. The chain is RNA exonuclease 3 (REX3) from Kluyveromyces lactis (strain ATCC 8585 / CBS 2359 / DSM 70799 / NBRC 1267 / NRRL Y-1140 / WM37) (Yeast).